We begin with the raw amino-acid sequence, 273 residues long: 3-methyl-2-oxobutanoate hydroxymethyltransferase (273 aa).

Asp53 and Asp92 together coordinate Mg(2+). Residues 53–54 (DS), Asp92, and Lys122 contribute to the 3-methyl-2-oxobutanoate site. Position 124 (Glu124) interacts with Mg(2+). Glu191 (proton acceptor) is an active-site residue.

This sequence belongs to the PanB family. Homodecamer; pentamer of dimers. Mg(2+) serves as cofactor.

It is found in the cytoplasm. It catalyses the reaction 3-methyl-2-oxobutanoate + (6R)-5,10-methylene-5,6,7,8-tetrahydrofolate + H2O = 2-dehydropantoate + (6S)-5,6,7,8-tetrahydrofolate. The protein operates within cofactor biosynthesis; (R)-pantothenate biosynthesis; (R)-pantoate from 3-methyl-2-oxobutanoate: step 1/2. Catalyzes the reversible reaction in which hydroxymethyl group from 5,10-methylenetetrahydrofolate is transferred onto alpha-ketoisovalerate to form ketopantoate. The polypeptide is 3-methyl-2-oxobutanoate hydroxymethyltransferase (Bacteroides fragilis (strain ATCC 25285 / DSM 2151 / CCUG 4856 / JCM 11019 / LMG 10263 / NCTC 9343 / Onslow / VPI 2553 / EN-2)).